Reading from the N-terminus, the 266-residue chain is Auxin-responsive protein IAA21 (266 aa).

The short motif at 24-28 (LRLGL) is the EAR-like (transcriptional repression) element. The segment at 27-50 (GLPGTAEEAESEGGGGGGTDAAPL) is disordered. The PB1 domain maps to 146 to 248 (CLYVKVSMDG…SCRRLRIMKG (103 aa)).

It belongs to the Aux/IAA family. As to quaternary structure, homodimers and heterodimers. In terms of tissue distribution, highly expressed in flowers. Expressed in roots and seedlings.

The protein localises to the nucleus. Its function is as follows. Aux/IAA proteins are short-lived transcriptional factors that function as repressors of early auxin response genes at low auxin concentrations. The sequence is that of Auxin-responsive protein IAA21 (IAA21) from Oryza sativa subsp. japonica (Rice).